A 322-amino-acid chain; its full sequence is Heat-inducible transcription repressor HrcA (322 aa).

It belongs to the HrcA family.

In terms of biological role, negative regulator of class I heat shock genes (grpE-dnaK-dnaJ and groELS operons). Prevents heat-shock induction of these operons. The sequence is that of Heat-inducible transcription repressor HrcA from Staphylococcus carnosus (strain TM300).